A 310-amino-acid polypeptide reads, in one-letter code: Manganese ABC transporter substrate-binding lipoprotein scaA (310 aa).

Positions methionine 1–alanine 19 are cleaved as a signal peptide. The N-palmitoyl cysteine moiety is linked to residue cysteine 20. The S-diacylglycerol cysteine moiety is linked to residue cysteine 20. Positions 68, 140, 206, and 281 each coordinate Mn(2+).

The protein belongs to the bacterial solute-binding protein 9 family. Lipoprotein receptor antigen (Lrai) subfamily. The complex is composed of two ATP-binding proteins (ScaC), two transmembrane proteins (ScaB) and a solute-binding protein (ScaA).

The protein resides in the cell membrane. In terms of biological role, part of ATP-binding cassette (ABC) transport system ScaABC involved in manganese import. Essential for growth under Mn(2+)-limiting conditions. Also acts as an adhesin which is involved on adherence to extracellular matrix. It is an important factor in pathogenesis and infection. This chain is Manganese ABC transporter substrate-binding lipoprotein scaA, found in Streptococcus gordonii.